A 145-amino-acid polypeptide reads, in one-letter code: 3-dehydroquinate dehydratase (145 aa).

Tyr-24 functions as the Proton acceptor in the catalytic mechanism. 3 residues coordinate substrate: Asn-75, His-81, and Asp-88. The active-site Proton donor is His-101. Substrate is bound by residues 102–103 (IS) and Arg-112.

This sequence belongs to the type-II 3-dehydroquinase family. As to quaternary structure, homododecamer.

The enzyme catalyses 3-dehydroquinate = 3-dehydroshikimate + H2O. It participates in metabolic intermediate biosynthesis; chorismate biosynthesis; chorismate from D-erythrose 4-phosphate and phosphoenolpyruvate: step 3/7. In terms of biological role, catalyzes a trans-dehydration via an enolate intermediate. In Rhizobium johnstonii (strain DSM 114642 / LMG 32736 / 3841) (Rhizobium leguminosarum bv. viciae), this protein is 3-dehydroquinate dehydratase.